A 712-amino-acid chain; its full sequence is WD repeat-containing protein 91 (712 aa).

The stretch at 148-180 forms a coiled coil; the sequence is RRTNQVQEENEVLRQKLFALQAEIHRLKKEEQQ. Residue serine 221 is modified to Phosphoserine. A compositionally biased stretch (low complexity) spans 230 to 243; sequence LLPQSKKSPSRLSP. The segment at 230–336 is disordered; that stretch reads LLPQSKKSPS…EAEPCPELHT (107 aa). Serine 253 and serine 258 each carry phosphoserine. Residues 297–308 are compositionally biased toward basic and acidic residues; that stretch reads RLQDHGKERKEL. WD repeat units lie at residues 371–410, 413–453, 480–520, 525–564, 567–606, 629–667, and 674–712; these read EHHS…QTKA, ISKS…NLCE, AAPS…QQLQ, PEPI…CAMS, AHYG…LKVS, VQVP…KVLE, and GHRA…AHKA.

The protein belongs to the WD repeat WDR91 family. As to quaternary structure, interacts with WDR81; involved in early to late endosome cargo transport. Interacts with BECN1; negatively regulates the PI3 kinase/PI3K activity associated with endosomal membranes.

It localises to the early endosome membrane. The protein resides in the late endosome membrane. Its function is as follows. Functions as a negative regulator of the PI3 kinase/PI3K activity associated with endosomal membranes via BECN1, a core subunit of the PI3K complex. By modifying the phosphatidylinositol 3-phosphate/PtdInsP3 content of endosomal membranes may regulate endosome fusion, recycling, sorting and early to late endosome transport. It is for instance, required for the delivery of cargos like BST2/tetherin from early to late endosome and thereby participates indirectly to their degradation by the lysosome. May play a role in meiosis. The sequence is that of WD repeat-containing protein 91 from Pongo abelii (Sumatran orangutan).